A 540-amino-acid chain; its full sequence is Glucose-6-phosphate isomerase (540 aa).

Glu351 functions as the Proton donor in the catalytic mechanism. Residues His382 and Lys506 contribute to the active site.

Belongs to the GPI family.

The protein localises to the cytoplasm. It carries out the reaction alpha-D-glucose 6-phosphate = beta-D-fructose 6-phosphate. It participates in carbohydrate biosynthesis; gluconeogenesis. It functions in the pathway carbohydrate degradation; glycolysis; D-glyceraldehyde 3-phosphate and glycerone phosphate from D-glucose: step 2/4. In terms of biological role, catalyzes the reversible isomerization of glucose-6-phosphate to fructose-6-phosphate. This chain is Glucose-6-phosphate isomerase, found in Corynebacterium glutamicum (strain ATCC 13032 / DSM 20300 / JCM 1318 / BCRC 11384 / CCUG 27702 / LMG 3730 / NBRC 12168 / NCIMB 10025 / NRRL B-2784 / 534).